The primary structure comprises 262 residues: MTTKVAIIGSGNIGTDLMFKIQRLSQTLEVAALVGIDPESDGLQRAGRLGIPITADGVAGLLDIPGFDQISIVFDATSARAHVANAAALEPFGKQLVDLTPAAIGPYVVPAVNLEENLAARNVNMVTCGGQATIPMVAAVSHVAPVAYAEIVASIASRSAGPGTRANIDEFTETTSKAIEVVGGAHRGKAIIVLNPADPPLIMRDTILCLIGDADHDAIRDSVHRRVAEVSEYVPGYRLKQDVQITTVTDDVPLSTLGRVSQ.

10 to 13 (SGNI) contacts NAD(+). The active-site Acyl-thioester intermediate is C128. An NAD(+)-binding site is contributed by 159–167 (SAGPGTRAN).

This sequence belongs to the acetaldehyde dehydrogenase family.

The enzyme catalyses acetaldehyde + NAD(+) + CoA = acetyl-CoA + NADH + H(+). The polypeptide is Acetaldehyde dehydrogenase 7 (Rhodococcus jostii (strain RHA1)).